Here is a 176-residue protein sequence, read N- to C-terminus: Ribosome maturation factor RimM (176 aa).

The PRC barrel domain occupies Pro96 to Phe176.

This sequence belongs to the RimM family. Binds ribosomal protein uS19.

The protein resides in the cytoplasm. Functionally, an accessory protein needed during the final step in the assembly of 30S ribosomal subunit, possibly for assembly of the head region. Essential for efficient processing of 16S rRNA. May be needed both before and after RbfA during the maturation of 16S rRNA. It has affinity for free ribosomal 30S subunits but not for 70S ribosomes. The sequence is that of Ribosome maturation factor RimM from Shewanella baltica (strain OS223).